A 258-amino-acid polypeptide reads, in one-letter code: Triosephosphate isomerase (258 aa).

11-13 (NWK) serves as a coordination point for substrate. Residue histidine 101 is the Electrophile of the active site. Glutamate 173 serves as the catalytic Proton acceptor. Substrate contacts are provided by residues glycine 179, serine 219, and 240 to 241 (GG).

It belongs to the triosephosphate isomerase family. Homodimer.

Its subcellular location is the cytoplasm. The catalysed reaction is D-glyceraldehyde 3-phosphate = dihydroxyacetone phosphate. Its pathway is carbohydrate biosynthesis; gluconeogenesis. It functions in the pathway carbohydrate degradation; glycolysis; D-glyceraldehyde 3-phosphate from glycerone phosphate: step 1/1. Involved in the gluconeogenesis. Catalyzes stereospecifically the conversion of dihydroxyacetone phosphate (DHAP) to D-glyceraldehyde-3-phosphate (G3P). The protein is Triosephosphate isomerase of Streptomyces coelicolor (strain ATCC BAA-471 / A3(2) / M145).